Consider the following 346-residue polypeptide: Biotin synthase (346 aa).

In terms of domain architecture, Radical SAM core spans 40-264; the sequence is NEVQVSTLLS…MMPHSHVRLS (225 aa). Residues C55, C59, and C62 each coordinate [4Fe-4S] cluster. [2Fe-2S] cluster contacts are provided by C99, C130, C190, and R262.

This sequence belongs to the radical SAM superfamily. Biotin synthase family. In terms of assembly, homodimer. [4Fe-4S] cluster serves as cofactor. It depends on [2Fe-2S] cluster as a cofactor.

The enzyme catalyses (4R,5S)-dethiobiotin + (sulfur carrier)-SH + 2 reduced [2Fe-2S]-[ferredoxin] + 2 S-adenosyl-L-methionine = (sulfur carrier)-H + biotin + 2 5'-deoxyadenosine + 2 L-methionine + 2 oxidized [2Fe-2S]-[ferredoxin]. It functions in the pathway cofactor biosynthesis; biotin biosynthesis; biotin from 7,8-diaminononanoate: step 2/2. Its function is as follows. Catalyzes the conversion of dethiobiotin (DTB) to biotin by the insertion of a sulfur atom into dethiobiotin via a radical-based mechanism. The polypeptide is Biotin synthase (Colwellia psychrerythraea (strain 34H / ATCC BAA-681) (Vibrio psychroerythus)).